Reading from the N-terminus, the 67-residue chain is Lantibiotic Flvbeta.b (67 aa).

A propeptide spans 1–34 (MDNNTKLQKLYEQLAATGSEKELDAMLDENMAGA) (cleaved by FlvT). Residue Ser36 is modified to 2,3-didehydroalanine (Ser); by FlvM2. 2,3-didehydrobutyrine; by FlvM2 is present on residues Thr39 and Thr43. 3 consecutive cross-links (beta-methyllanthionine (Thr-Cys); by FlvM2) follow at residues 50–56 (TTGFDWC), 58–61 (TGAC), and 62–65 (TYSC).

Post-translationally, contains DL-beta-methyllanthionine, when coepressed in E.coli with the flavecin synthetase FlvM2.

The protein resides in the secreted. Its function is as follows. Lanthionine-containing peptide antibiotic (lantibiotic) only active on Gram-positive bacteria in synergy with Flvalpha.a. Is not active in absence of Flvalpha.a, which is encoded by the same operon than Flvbeta.b. The bactericidal activity of lantibiotics is based on depolarization of energized bacterial cytoplasmic membranes, initiated by the formation of aqueous transmembrane pores. The chain is Lantibiotic Flvbeta.b from Ruminococcus flavefaciens.